A 246-amino-acid chain; its full sequence is 7-cyano-7-deazaguanine synthase (246 aa).

Residue 24 to 34 (FSGGLDSTTVL) coordinates ATP. Zn(2+) is bound by residues Cys-209, Cys-219, Cys-222, and Cys-225.

Belongs to the QueC family. It depends on Zn(2+) as a cofactor.

The catalysed reaction is 7-carboxy-7-deazaguanine + NH4(+) + ATP = 7-cyano-7-deazaguanine + ADP + phosphate + H2O + H(+). The protein operates within purine metabolism; 7-cyano-7-deazaguanine biosynthesis. Catalyzes the ATP-dependent conversion of 7-carboxy-7-deazaguanine (CDG) to 7-cyano-7-deazaguanine (preQ(0)). This Polynucleobacter asymbioticus (strain DSM 18221 / CIP 109841 / QLW-P1DMWA-1) (Polynucleobacter necessarius subsp. asymbioticus) protein is 7-cyano-7-deazaguanine synthase.